The chain runs to 518 residues: Glutamate--cysteine ligase (518 aa).

Belongs to the glutamate--cysteine ligase type 1 family. Type 1 subfamily.

It catalyses the reaction L-cysteine + L-glutamate + ATP = gamma-L-glutamyl-L-cysteine + ADP + phosphate + H(+). It functions in the pathway sulfur metabolism; glutathione biosynthesis; glutathione from L-cysteine and L-glutamate: step 1/2. In Klebsiella pneumoniae subsp. pneumoniae (strain ATCC 700721 / MGH 78578), this protein is Glutamate--cysteine ligase.